A 616-amino-acid chain; its full sequence is E3 ubiquitin-protein ligase DTX4 (616 aa).

WWE domains follow at residues 1-78 (MLLA…PVRR) and 79-155 (NYYD…RVRR). Disordered stretches follow at residues 223 to 254 (VGKLPQPPGPGAKPLDTTGTIRGPGKTAPSQV) and 355 to 387 (PPPVSKSEIKSIPGVSNTSRKTTKKQAKKGKTP). Over residues 375–384 (KTTKKQAKKG) the composition is skewed to basic residues. Residues 406-465 (CTICMERLTAPSGYKGPQPTVKPDLVGKLSRCGHIYHIYCLVAMYNNGNKDGSLQCPTCK) form an RING-type; atypical zinc finger.

This sequence belongs to the Deltex family. Interacts with NLRP4. As to expression, expressed in brain, testis, embryonic fibroblasts and thymocytes.

Its subcellular location is the cytoplasm. The enzyme catalyses S-ubiquitinyl-[E2 ubiquitin-conjugating enzyme]-L-cysteine + [acceptor protein]-L-lysine = [E2 ubiquitin-conjugating enzyme]-L-cysteine + N(6)-ubiquitinyl-[acceptor protein]-L-lysine.. The protein operates within protein modification; protein ubiquitination. Its function is as follows. Functions as a ubiquitin ligase protein in vivo, mediating 'Lys48'-linked polyubiquitination and promoting degradation of TBK1, targeting to TBK1 requires interaction with NLRP4. Regulator of Notch signaling, a signaling pathway involved in cell-cell communications that regulates a broad spectrum of cell-fate determinations. The polypeptide is E3 ubiquitin-protein ligase DTX4 (Dtx4) (Mus musculus (Mouse)).